The sequence spans 228 residues: Ribulose-phosphate 3-epimerase, cytoplasmic isoform (228 aa).

Serine 12 contributes to the substrate binding site. A divalent metal cation contacts are provided by histidine 37, aspartate 39, and histidine 70. The active-site Proton acceptor is aspartate 39. Substrate is bound by residues histidine 70, 150–153 (GFGG), 179–181 (DGG), and 201–202 (GS). A divalent metal cation is bound at residue aspartate 179. Aspartate 179 (proton donor) is an active-site residue.

Belongs to the ribulose-phosphate 3-epimerase family. Homodimer. It depends on Co(2+) as a cofactor. The cofactor is Fe(2+). Mn(2+) is required as a cofactor. Requires Zn(2+) as cofactor. As to expression, predominantly accumulates in roots and seedlings.

The protein resides in the cytoplasm. The catalysed reaction is D-ribulose 5-phosphate = D-xylulose 5-phosphate. It participates in carbohydrate degradation; pentose phosphate pathway; D-xylulose 5-phosphate from D-ribulose 5-phosphate (non-oxidative stage): step 1/1. Its function is as follows. Catalyzes the reversible epimerization of D-ribulose 5-phosphate to D-xylulose 5-phosphate. This chain is Ribulose-phosphate 3-epimerase, cytoplasmic isoform, found in Oryza sativa subsp. japonica (Rice).